The following is a 215-amino-acid chain: Transmembrane emp24 domain-containing protein 11 (215 aa).

Residues 1–17 (MQIQTILLCFSFSFSAA) form the signal peptide. The Lumenal segment spans residues 18-167 (FYFHAGEREE…ILKEQDYQRD (150 aa)). In terms of domain architecture, GOLD spans 27 to 125 (EKCIIEDIPS…KLRIHLDIRV (99 aa)). N-linked (GlcNAc...) asparagine glycosylation is present at asparagine 105. Positions 136–171 (QAKDKVNEVTFKLQHLIEQVEQILKEQDYQRDREEN) form a coiled coil. The chain crosses the membrane as a helical span at residues 168 to 185 (REENFRITSEDTNRNVLW). Topologically, residues 186-215 (WAFAQILIFISVGIFQMKHLKDFFIAKKLV) are cytoplasmic. Residues 208–209 (FF) carry the COPII vesicle coat-binding motif. The COPI vesicle coat-binding signature appears at 208 to 215 (FFIAKKLV).

This sequence belongs to the EMP24/GP25L family.

The protein resides in the endoplasmic reticulum membrane. Part of a complex whose function is to bind Ca(2+) to the ER membrane and thereby regulate the retention of ER resident proteins. This is Transmembrane emp24 domain-containing protein 11 (Tmed11) from Mus musculus (Mouse).